The sequence spans 371 residues: MSL complex subunit 3B (371 aa).

Disordered regions lie at residues 1-47 (MATL…DERA) and 160-230 (EERA…PQAK). Basic and acidic residues predominate over residues 8–47 (PKDDGEGKDEGGSDRGDGDSKPKGKKEVEPHTRREADERA). The MRG domain occupies 44–367 (DERAMRIPIP…CEAHYSSKNP (324 aa)). Residues 183–193 (SESQAVAGPAA) show a composition bias toward low complexity. Positions 206–216 (APRRSTRHSTH) are enriched in basic residues.

It localises to the nucleus. Its function is as follows. Probable non-catalytic component of the MSL histone acetyltransferase complex, a multiprotein complex that mediates the majority of histone H4 acetylation at 'Lys-16' (H4K16ac), an epigenetic mark that prevents chromatin compaction. The protein is MSL complex subunit 3B of Mus musculus (Mouse).